The sequence spans 711 residues: MFEKPVVKTFQYGNHTVTLETGVIARQATAAVMVTMDDTAVFVSVVGKKEAVAGQDFFPLTVNYQERTYAAGKIPGGFFKREGRPSEGETLTARLIDRPIRPLFPDAFKNEVQVIATVVSVNPDVQPDIPTMIGTSAALAISGIPFNGPIGAARVGHIDGQLVLNPSQTELNASRLDLVVAGTESAVLMVESEADNLTEEEMLAAVVFGHDQQQVVINAINEFKAEVATPAWDWVAPEENTALKTKIAELAEAKLVEAYQITEKMARYDRIHEIAAEVNEALLAQDPEADTKEIHTIFHDLEKTVVRRSIIAGNPRIDGREKDMVRALDVRTGVLPRTHGSALFTRGETQALVTATLGTQRDAQIIDELTGERKDHFLLHYNFPPYCVGETGFVGSPKRREIGHGKLAKRGIAAVMPSVDEFPYTVRVVSEITESNGSSSMASVCGTSLALMDAGVPIKASVAGIAMGLVKEGDDFVVLSDILGDEDHLGDMDFKVAGTSTGVTALQMDIKIEGITKEIMQIALNQAQGARKHILSVMDEALAGARDDISEFAPRIHTMKISAEKIKDVIGKGGAVIRALTEETGTTIEIEDDGTIKIAATEGAAAKEAIRRIEEITAEVEVGRIYTGKVARLADFGAFVTVLPGKDGLVHISQIAEKRVEKVSDYLTEGQEVQVKVLEIDRQGRVRLSMKEAVEKPAEEAAAEAPAAKEE.

Mg(2+) is bound by residues aspartate 487 and aspartate 493. The region spanning 554 to 613 is the KH domain; the sequence is PRIHTMKISAEKIKDVIGKGGAVIRALTEETGTTIEIEDDGTIKIAATEGAAAKEAIRRI. In terms of domain architecture, S1 motif spans 623–691; it reads GRIYTGKVAR…RQGRVRLSMK (69 aa). The disordered stretch occupies residues 691–711; the sequence is KEAVEKPAEEAAAEAPAAKEE.

It belongs to the polyribonucleotide nucleotidyltransferase family. As to quaternary structure, component of the RNA degradosome, which is a multiprotein complex involved in RNA processing and mRNA degradation. Mg(2+) serves as cofactor.

It is found in the cytoplasm. The catalysed reaction is RNA(n+1) + phosphate = RNA(n) + a ribonucleoside 5'-diphosphate. Functionally, involved in mRNA degradation. Catalyzes the phosphorolysis of single-stranded polyribonucleotides processively in the 3'- to 5'-direction. The sequence is that of Polyribonucleotide nucleotidyltransferase from Vibrio parahaemolyticus serotype O3:K6 (strain RIMD 2210633).